Consider the following 328-residue polypeptide: Ribosomal RNA small subunit methyltransferase H (328 aa).

S-adenosyl-L-methionine is bound by residues 64–66, D83, F112, D129, and Q136; that span reads GGH.

This sequence belongs to the methyltransferase superfamily. RsmH family.

It is found in the cytoplasm. The catalysed reaction is cytidine(1402) in 16S rRNA + S-adenosyl-L-methionine = N(4)-methylcytidine(1402) in 16S rRNA + S-adenosyl-L-homocysteine + H(+). In terms of biological role, specifically methylates the N4 position of cytidine in position 1402 (C1402) of 16S rRNA. The chain is Ribosomal RNA small subunit methyltransferase H from Bdellovibrio bacteriovorus (strain ATCC 15356 / DSM 50701 / NCIMB 9529 / HD100).